Reading from the N-terminus, the 98-residue chain is Large ribosomal subunit protein bL27 (98 aa).

Residues 1–13 constitute a propeptide that is removed on maturation; that stretch reads MKKIWFHLDLQFF.

Belongs to the bacterial ribosomal protein bL27 family. Post-translationally, the N-terminus is cleaved by ribosomal processing cysteine protease Prp.

This chain is Large ribosomal subunit protein bL27, found in Mycoplasmoides gallisepticum (strain R(low / passage 15 / clone 2)) (Mycoplasma gallisepticum).